Consider the following 29-residue polypeptide: Brevinin-2Tc (29 aa).

Cysteine 23 and cysteine 29 form a disulfide bridge.

Belongs to the frog skin active peptide (FSAP) family. Brevinin subfamily. Expressed by the skin glands.

The protein resides in the secreted. Its function is as follows. Antibacterial activity against representative Gram-negative and Gram-positive bacteria. This chain is Brevinin-2Tc, found in Rana temporaria (European common frog).